A 493-amino-acid polypeptide reads, in one-letter code: Glutamyl-tRNA(Gln) amidotransferase subunit A (493 aa).

Catalysis depends on charge relay system residues K78 and S158. The Acyl-ester intermediate role is filled by S182.

Belongs to the amidase family. GatA subfamily. Heterotrimer of A, B and C subunits.

The catalysed reaction is L-glutamyl-tRNA(Gln) + L-glutamine + ATP + H2O = L-glutaminyl-tRNA(Gln) + L-glutamate + ADP + phosphate + H(+). Functionally, allows the formation of correctly charged Gln-tRNA(Gln) through the transamidation of misacylated Glu-tRNA(Gln) in organisms which lack glutaminyl-tRNA synthetase. The reaction takes place in the presence of glutamine and ATP through an activated gamma-phospho-Glu-tRNA(Gln). The sequence is that of Glutamyl-tRNA(Gln) amidotransferase subunit A from Methylorubrum extorquens (strain CM4 / NCIMB 13688) (Methylobacterium extorquens).